The sequence spans 185 residues: Peptidyl-tRNA hydrolase (185 aa).

Tyr-14 is a tRNA binding site. His-19 functions as the Proton acceptor in the catalytic mechanism. Tyr-64, Asn-66, and Asn-112 together coordinate tRNA.

The protein belongs to the PTH family. In terms of assembly, monomer.

It localises to the cytoplasm. The catalysed reaction is an N-acyl-L-alpha-aminoacyl-tRNA + H2O = an N-acyl-L-amino acid + a tRNA + H(+). In terms of biological role, hydrolyzes ribosome-free peptidyl-tRNAs (with 1 or more amino acids incorporated), which drop off the ribosome during protein synthesis, or as a result of ribosome stalling. Catalyzes the release of premature peptidyl moieties from peptidyl-tRNA molecules trapped in stalled 50S ribosomal subunits, and thus maintains levels of free tRNAs and 50S ribosomes. This Shouchella clausii (strain KSM-K16) (Alkalihalobacillus clausii) protein is Peptidyl-tRNA hydrolase.